Reading from the N-terminus, the 659-residue chain is Protein kinase byr2 (659 aa).

Residues 4–67 enclose the SAM domain; sequence YTSKEVAEWL…LKQRDYLREF (64 aa). Over residues 180–190 the composition is skewed to low complexity; the sequence is PKLSSVLPTST. 2 disordered regions span residues 180-209 and 354-387; these read PKLS…YQRP and SFSP…EEDT. Over residues 354 to 365 the composition is skewed to polar residues; that stretch reads SFSPGSSPSFIE. The span at 367–380 shows a compositional bias: low complexity; that stretch reads PSPISPTSTTSEDT. Residues 394-658 enclose the Protein kinase domain; it reads WIRGALIGSG…ASELLSHPFV (265 aa). Residues 400-408 and lysine 423 contribute to the ATP site; that span reads IGSGSFGQV. Residue aspartate 522 is the Proton acceptor of the active site.

Belongs to the protein kinase superfamily. STE Ser/Thr protein kinase family. MAP kinase kinase kinase subfamily. Interacts with rad24 and rad25; these prevent its translocation to the cell membrane during nitrogen starvation.

The protein localises to the cytoplasm. The protein resides in the cell membrane. It carries out the reaction L-seryl-[protein] + ATP = O-phospho-L-seryl-[protein] + ADP + H(+). The catalysed reaction is L-threonyl-[protein] + ATP = O-phospho-L-threonyl-[protein] + ADP + H(+). Functionally, serine/threonine protein kinase involved in conjugation and sporulation. It is thought that it phosphorylates the byr1 protein kinase which itself phosphorylate the spk1 kinase. The protein is Protein kinase byr2 of Schizosaccharomyces pombe (strain 972 / ATCC 24843) (Fission yeast).